Here is a 388-residue protein sequence, read N- to C-terminus: Pyruvate dehydrogenase E1 component subunit alpha, testis-specific form, mitochondrial (388 aa).

A mitochondrion-targeting transit peptide spans 1–27 (MLAAFISRVLRRVAQKSARRVLVASRN). Positions 90, 116, 117, 163, 165, 194, 195, 196, 223, and 225 each coordinate pyruvate. 8 residues coordinate thiamine diphosphate: Tyr116, Arg117, Gly163, Val165, Asp194, Gly195, Ala196, and Asn223. Asp194 is a Mg(2+) binding site. The Mg(2+) site is built by Asn223 and Tyr225. Residue His290 coordinates thiamine diphosphate. Ser291 carries the phosphoserine; by PDK1, PDK2, PDK3 and PDK4 modification. Position 293 is a phosphoserine (Ser293). Residue Ser298 is modified to Phosphoserine; by PDK3.

In terms of assembly, heterotetramer of two PDHA2 and two PDHB subunits. The heterotetramer interacts with DLAT, and is part of the multimeric pyruvate dehydrogenase complex that contains multiple copies of pyruvate dehydrogenase (E1), dihydrolipoamide acetyltransferase (DLAT, E2) and lipoamide dehydrogenase (DLD, E3). These subunits are bound to an inner core composed of about 48 DLAT and 12 PDHX molecules. Thiamine diphosphate is required as a cofactor. It depends on Mg(2+) as a cofactor. Phosphorylation at Ser-291, Ser-293 and Ser-298 by PDK family kinases inactivates the enzyme; for this phosphorylation at a single site is sufficient. Phosphorylation at Ser-293 interferes with access to active site, and thereby inactivates the enzyme. Dephosphorylation at all three sites, i.e. at Ser-291, Ser-293 and Ser-298, is required for reactivation. As to expression, testis. Expressed in postmeiotic spermatogenic cells.

Its subcellular location is the mitochondrion matrix. The enzyme catalyses N(6)-[(R)-lipoyl]-L-lysyl-[protein] + pyruvate + H(+) = N(6)-[(R)-S(8)-acetyldihydrolipoyl]-L-lysyl-[protein] + CO2. Its activity is regulated as follows. Pyruvate dehydrogenase activity is inhibited by phosphorylation of PDHA2; it is reactivated by dephosphorylation. Its function is as follows. The pyruvate dehydrogenase complex catalyzes the overall conversion of pyruvate to acetyl-CoA and CO(2), and thereby links the glycolytic pathway to the tricarboxylic cycle. The protein is Pyruvate dehydrogenase E1 component subunit alpha, testis-specific form, mitochondrial (PDHA2) of Homo sapiens (Human).